We begin with the raw amino-acid sequence, 327 residues long: Aspartate--ammonia ligase (327 aa).

The protein belongs to the class-II aminoacyl-tRNA synthetase family. AsnA subfamily.

It is found in the cytoplasm. It catalyses the reaction L-aspartate + NH4(+) + ATP = L-asparagine + AMP + diphosphate + H(+). The protein operates within amino-acid biosynthesis; L-asparagine biosynthesis; L-asparagine from L-aspartate (ammonia route): step 1/1. This is Aspartate--ammonia ligase from Fusobacterium nucleatum subsp. nucleatum (strain ATCC 25586 / DSM 15643 / BCRC 10681 / CIP 101130 / JCM 8532 / KCTC 2640 / LMG 13131 / VPI 4355).